The sequence spans 90 residues: uncharacterized protein (90 aa).

This is an uncharacterized protein from Archaeoglobus fulgidus (strain ATCC 49558 / DSM 4304 / JCM 9628 / NBRC 100126 / VC-16).